Consider the following 74-residue polypeptide: DNA-directed RNA polymerase subunit omega (74 aa).

This sequence belongs to the RNA polymerase subunit omega family. The RNAP catalytic core consists of 2 alpha, 1 beta, 1 beta' and 1 omega subunit. When a sigma factor is associated with the core the holoenzyme is formed, which can initiate transcription.

The enzyme catalyses RNA(n) + a ribonucleoside 5'-triphosphate = RNA(n+1) + diphosphate. Functionally, promotes RNA polymerase assembly. Latches the N- and C-terminal regions of the beta' subunit thereby facilitating its interaction with the beta and alpha subunits. This chain is DNA-directed RNA polymerase subunit omega, found in Helicobacter pylori (strain P12).